Consider the following 324-residue polypeptide: tRNA-cytidine(32) 2-sulfurtransferase (324 aa).

Residues 1–26 (MQDLIDSPTAARTPAEEKIRHEGNKL) are disordered. Basic and acidic residues predominate over residues 14–26 (PAEEKIRHEGNKL). Residues 55-60 (SGGKDS) carry the PP-loop motif motif. [4Fe-4S] cluster-binding residues include Cys-130, Cys-133, and Cys-221. Residues 278 to 310 (RPDANGDTAFDPIDPEDPREDAGDACASSPADG) are disordered.

The protein belongs to the TtcA family. As to quaternary structure, homodimer. It depends on Mg(2+) as a cofactor. [4Fe-4S] cluster serves as cofactor.

The protein localises to the cytoplasm. It catalyses the reaction cytidine(32) in tRNA + S-sulfanyl-L-cysteinyl-[cysteine desulfurase] + AH2 + ATP = 2-thiocytidine(32) in tRNA + L-cysteinyl-[cysteine desulfurase] + A + AMP + diphosphate + H(+). Its pathway is tRNA modification. In terms of biological role, catalyzes the ATP-dependent 2-thiolation of cytidine in position 32 of tRNA, to form 2-thiocytidine (s(2)C32). The sulfur atoms are provided by the cysteine/cysteine desulfurase (IscS) system. The protein is tRNA-cytidine(32) 2-sulfurtransferase of Bordetella petrii (strain ATCC BAA-461 / DSM 12804 / CCUG 43448).